Here is a 378-residue protein sequence, read N- to C-terminus: MKFVIAPDSFKESLTALEVATAIETGFKRVFPDADYVKLPMADGGEGTVQSLVDATQGKLIECEVTAPLGDKVKSFFGLSGDGKTAIIEMAAASGLHLVPPEKRNPLLTTSYGTGELIKLALDLGVESFILGIGGSATNDGGVGMLQALGMQCLDSQDKPIGFGGAELANIVKIDVQQLDPRLQQVHIEVACDVNNPLCGECGASAIFGPQKGATPEMVKQLDAALSHFAEIAERDCGKQIRDQAGAGAAGGMGGGLLLLPSVQLKAGIQIVLDRLHLIDYVKDADVVITGEGRIDAQSIMGKTPIGVARTAKQFNKPVIAIAGCLREDYDVVFDHGIDAVFPIIHQLGDLSDILKQGEQNLISTAQNVARVLAFKFH.

It belongs to the glycerate kinase type-1 family.

The catalysed reaction is (R)-glycerate + ATP = (2R)-3-phosphoglycerate + ADP + H(+). This chain is Glycerate kinase (glxK), found in Haemophilus influenzae (strain ATCC 51907 / DSM 11121 / KW20 / Rd).